The sequence spans 746 residues: Dystrobrevin alpha (746 aa).

The segment at 1 to 288 is interaction with MAGEE1; the sequence is MIEDSGKRGN…SHSNQHQMKE (288 aa). A ZZ-type zinc finger spans residues 238 to 294; sequence FHPVECSYCHSESMMGFRYRCQQCHNYQLCQDCFWRGHAGGSHSNQHQMKEYTSWKS. Residues cysteine 243, cysteine 246, cysteine 258, cysteine 261, cysteine 267, cysteine 270, histidine 280, and histidine 284 each contribute to the Zn(2+) site. Positions 397 to 447 are syntrophin-binding region; the sequence is DRLADEHVLIGLYVNMLRNDPPCMLESSNRLDEEHRLIARYAARLAAESSS. Residues 458-557 adopt a coiled-coil conformation; sequence DISFTIDANK…KLLKEEELKQ (100 aa). 3 disordered regions span residues 555–577, 646–667, and 684–721; these read LKQG…SRPI, ETES…APSP, and YIHG…VRQL. Positions 563–576 are enriched in low complexity; the sequence is SSPRSSPSHTISRP. At serine 666 the chain carries Phosphoserine.

This sequence belongs to the dystrophin family. Dystrobrevin subfamily. As to quaternary structure, interacts with dystrophin, utrophin and the syntrophins SNTA1, SNTB1, SNTB2, SNTG1 and SNTG2. Binds dystrobrevin binding protein 1. Interacts with MAGEE1. Interacts with Ctnnal1. The interaction is required for correct localization of both Ctnnal1 and Dtna. In terms of assembly, does not interact with utrophin. Does not interact with syntrophin. Post-translationally, phosphorylation of isoform 2 on tyrosine kinase substrate domain present in the C-terminus. As to expression, expressed in skeletal muscle, heart, lung and brain. Sarcolemma and neuromuscular junction in skeletal muscle. Isoform 2 is restricted to the neuromuscular junction. Isoforms 5 and 6 are only expressed in muscle.

It localises to the cytoplasm. Its subcellular location is the synapse. The protein resides in the cell membrane. In terms of biological role, involved in synapse maturation and required for normal muscle function. The protein is Dystrobrevin alpha (Dtna) of Mus musculus (Mouse).